We begin with the raw amino-acid sequence, 427 residues long: Gamma-glutamyl phosphate reductase (427 aa).

It belongs to the gamma-glutamyl phosphate reductase family.

The protein localises to the cytoplasm. The catalysed reaction is L-glutamate 5-semialdehyde + phosphate + NADP(+) = L-glutamyl 5-phosphate + NADPH + H(+). It functions in the pathway amino-acid biosynthesis; L-proline biosynthesis; L-glutamate 5-semialdehyde from L-glutamate: step 2/2. Catalyzes the NADPH-dependent reduction of L-glutamate 5-phosphate into L-glutamate 5-semialdehyde and phosphate. The product spontaneously undergoes cyclization to form 1-pyrroline-5-carboxylate. This is Gamma-glutamyl phosphate reductase from Brucella ovis (strain ATCC 25840 / 63/290 / NCTC 10512).